The primary structure comprises 342 residues: MKLAVIPGDGIGTEVTAEALKVMRAALAGSGESIETTDYDLGARRYLRNGELLTDDDLASLREHDAILLGAVGDPRTVPSGVLERGLLLKMRFVLDHHVNLRPSVLYPGVTSPLSDPGKVDFIVVREGTEGLYAGNGGSIRVDTPHEVANETSVNTRYGVERVVRYAFDRAQERRKKLTLVHKTNVLVYAGGLWQRTVDQVAQEYLDVTVDYCHIDAATIYMVTDPSRFDVIVTDNLFGDIITDLAGAVTGGIGLAASGNIDATGTNPSMFEPVHGSAPDIAGKGIADPTAAILSGALLFRHLGKTDEADAIEAAVRNDVASRDGSIRTEEVGTRIANSLDS.

Residues Arg-92, Arg-102, Arg-126, and Asp-216 each contribute to the substrate site. Mg(2+) is bound by residues Asp-216, Asp-240, and Asp-244. Residue 276 to 288 (GSAPDIAGKGIAD) participates in NAD(+) binding.

It belongs to the isocitrate and isopropylmalate dehydrogenases family. LeuB type 2 subfamily. As to quaternary structure, homodimer. Requires Mg(2+) as cofactor. Mn(2+) serves as cofactor.

It is found in the cytoplasm. The enzyme catalyses (2R,3S)-3-isopropylmalate + NAD(+) = 4-methyl-2-oxopentanoate + CO2 + NADH. Its pathway is amino-acid biosynthesis; L-leucine biosynthesis; L-leucine from 3-methyl-2-oxobutanoate: step 3/4. Its function is as follows. Catalyzes the oxidation of 3-carboxy-2-hydroxy-4-methylpentanoate (3-isopropylmalate) to 3-carboxy-4-methyl-2-oxopentanoate. The product decarboxylates to 4-methyl-2 oxopentanoate. The chain is 3-isopropylmalate dehydrogenase from Corynebacterium kroppenstedtii (strain DSM 44385 / JCM 11950 / CIP 105744 / CCUG 35717).